Here is a 1053-residue protein sequence, read N- to C-terminus: Carbamoyl phosphate synthase large chain (1053 aa).

The tract at residues 1–397 is carboxyphosphate synthetic domain; it reads MPKRTDIKKV…SFMKAKRSID (397 aa). Residues arginine 127, arginine 167, glycine 173, glycine 174, glutamate 206, valine 208, glutamate 213, glycine 239, isoleucine 240, histidine 241, glutamine 282, and glutamate 294 each coordinate ATP. In terms of domain architecture, ATP-grasp 1 spans 131–323; it reads RDLMNEIGEP…IARVAAKIAI (193 aa). Glutamine 282, glutamate 294, and asparagine 296 together coordinate Mg(2+). Positions 282, 294, and 296 each coordinate Mn(2+). The tract at residues 398 to 530 is oligomerization domain; that stretch reads TDVRTHTSPS…YSTREGTSEI (133 aa). The tract at residues 531–919 is carbamoyl phosphate synthetic domain; the sequence is VRDKKQKILI…YKACISADNE (389 aa). In terms of domain architecture, ATP-grasp 2 spans 661–852; it reads SVLLTTLQIP…IAKIAAKVMI (192 aa). Residues arginine 697, serine 736, leucine 738, glutamate 743, glycine 768, isoleucine 769, histidine 770, serine 771, glutamine 811, and glutamate 823 each coordinate ATP. Mg(2+) contacts are provided by glutamine 811, glutamate 823, and asparagine 825. Mn(2+) contacts are provided by glutamine 811, glutamate 823, and asparagine 825. Residues 918–1053 enclose the MGS-like domain; the sequence is NELPLKGNVF…TLEPLSHYLR (136 aa). Positions 920-1053 are allosteric domain; sequence LPLKGNVFVS…TLEPLSHYLR (134 aa).

It belongs to the CarB family. Composed of two chains; the small (or glutamine) chain promotes the hydrolysis of glutamine to ammonia, which is used by the large (or ammonia) chain to synthesize carbamoyl phosphate. Tetramer of heterodimers (alpha,beta)4. The cofactor is Mg(2+). Requires Mn(2+) as cofactor.

It carries out the reaction hydrogencarbonate + L-glutamine + 2 ATP + H2O = carbamoyl phosphate + L-glutamate + 2 ADP + phosphate + 2 H(+). The enzyme catalyses hydrogencarbonate + NH4(+) + 2 ATP = carbamoyl phosphate + 2 ADP + phosphate + 2 H(+). Its pathway is amino-acid biosynthesis; L-arginine biosynthesis; carbamoyl phosphate from bicarbonate: step 1/1. It participates in pyrimidine metabolism; UMP biosynthesis via de novo pathway; (S)-dihydroorotate from bicarbonate: step 1/3. Functionally, large subunit of the glutamine-dependent carbamoyl phosphate synthetase (CPSase). CPSase catalyzes the formation of carbamoyl phosphate from the ammonia moiety of glutamine, carbonate, and phosphate donated by ATP, constituting the first step of 2 biosynthetic pathways, one leading to arginine and/or urea and the other to pyrimidine nucleotides. The large subunit (synthetase) binds the substrates ammonia (free or transferred from glutamine from the small subunit), hydrogencarbonate and ATP and carries out an ATP-coupled ligase reaction, activating hydrogencarbonate by forming carboxy phosphate which reacts with ammonia to form carbamoyl phosphate. This is Carbamoyl phosphate synthase large chain from Methanoregula boonei (strain DSM 21154 / JCM 14090 / 6A8).